The primary structure comprises 259 residues: L-ornithine N(alpha)-acyltransferase (259 aa).

Belongs to the acetyltransferase family. OlsB subfamily.

The enzyme catalyses a (3R)-hydroxyacyl-[ACP] + L-ornithine = a lyso-ornithine lipid + holo-[ACP] + H(+). It functions in the pathway lipid metabolism. Functionally, catalyzes the first step in the biosynthesis of ornithine lipids, which are phosphorus-free membrane lipids. Catalyzes the 3-hydroxyacyl-acyl carrier protein-dependent acylation of ornithine to form lyso-ornithine lipid (LOL). The sequence is that of L-ornithine N(alpha)-acyltransferase from Rhodobacter capsulatus (strain ATCC BAA-309 / NBRC 16581 / SB1003).